A 426-amino-acid chain; its full sequence is Tyrosine--tRNA ligase (426 aa).

An L-tyrosine-binding site is contributed by tyrosine 35. Positions 40–49 (PTAPSLHIGH) match the 'HIGH' region motif. Residues tyrosine 174 and glutamine 178 each coordinate L-tyrosine. The short motif at 234–238 (KFGKT) is the 'KMSKS' region element. An ATP-binding site is contributed by lysine 237. Residues 358–418 (PRVVDALVAT…WAVIRRGRRA (61 aa)) enclose the S4 RNA-binding domain.

The protein belongs to the class-I aminoacyl-tRNA synthetase family. TyrS type 1 subfamily. As to quaternary structure, homodimer.

It localises to the cytoplasm. The enzyme catalyses tRNA(Tyr) + L-tyrosine + ATP = L-tyrosyl-tRNA(Tyr) + AMP + diphosphate + H(+). Functionally, catalyzes the attachment of tyrosine to tRNA(Tyr) in a two-step reaction: tyrosine is first activated by ATP to form Tyr-AMP and then transferred to the acceptor end of tRNA(Tyr). The sequence is that of Tyrosine--tRNA ligase from Acidothermus cellulolyticus (strain ATCC 43068 / DSM 8971 / 11B).